We begin with the raw amino-acid sequence, 391 residues long: Homocysteine-responsive endoplasmic reticulum-resident ubiquitin-like domain member 1 protein (391 aa).

Met-1 bears the N-acetylmethionine mark. Over 1–263 the chain is Cytoplasmic; that stretch reads MESETEPEPV…VEEDDEINRD (263 aa). The 63-residue stretch at 10 to 72 folds into the Ubiquitin-like domain; it reads VTLLVKSPNQ…LLDHQCLRDL (63 aa). A disordered region spans residues 100-126; sequence KVAESTEEPAGSNRGQYPEDSSSDGLR. Residues 112–124 are compositionally biased toward polar residues; sequence NRGQYPEDSSSDG. The interaction with UBQLN1 stretch occupies residues 115-200; the sequence is QYPEDSSSDG…ASGAFVPPPS (86 aa). A Phosphoserine modification is found at Ser-135. Positions 170–190 are interaction with SYVN1; it reads LSWFQQIYARQYYMQYLAATA. Residues 264–284 traverse the membrane as a helical segment; it reads WLDWTYSAATFSVFLSILYFY. At 285–289 the chain is on the lumenal side; that stretch reads SSLSR. The chain crosses the membrane as a helical span at residues 290-310; that stretch reads FLMVMGATVVMYLHHVGWFPF. Over 311-391 the chain is Cytoplasmic; it reads RPRPVQNFPN…LPEGPPAIAN (81 aa). Residues 318–359 are disordered; the sequence is FPNDGPPPDVVNQDPNNNLQEGTDPETEDPNHLPPDRDVLDG. The segment covering 346–357 has biased composition (basic and acidic residues); it reads DPNHLPPDRDVL.

In terms of assembly, interacts with PSEN1 and PSEN2. Interacts with UBXN6. Interacts with UBQLN1, UBQLN2 and UBQLN4. Component of the HRD1 complex, which comprises at least SYNV1/HRD1, FAM8A1, HERPUD1/HERP, OS9, SEL1L and UBE2J1. FAM8A1 binding to SYNV1 may promote recruitment of HERPUD1 to the HRD1 complex. Widely expressed; in the brain, expression seems to be restricted to neurons and vascular smooth muscle cells. Present in activated microglia in senile plaques in the brain of patients with Alzheimer disease.

It localises to the endoplasmic reticulum membrane. Functionally, component of the endoplasmic reticulum quality control (ERQC) system also called ER-associated degradation (ERAD) involved in ubiquitin-dependent degradation of misfolded endoplasmic reticulum proteins. Could enhance presenilin-mediated amyloid-beta protein 40 generation. Binds to ubiquilins and this interaction is required for efficient degradation of CD3D via the ERAD pathway. The sequence is that of Homocysteine-responsive endoplasmic reticulum-resident ubiquitin-like domain member 1 protein (HERPUD1) from Homo sapiens (Human).